The following is a 357-amino-acid chain: Phosphoribosylformylglycinamidine cyclo-ligase (357 aa).

Belongs to the AIR synthase family.

The protein localises to the cytoplasm. The catalysed reaction is 2-formamido-N(1)-(5-O-phospho-beta-D-ribosyl)acetamidine + ATP = 5-amino-1-(5-phospho-beta-D-ribosyl)imidazole + ADP + phosphate + H(+). It functions in the pathway purine metabolism; IMP biosynthesis via de novo pathway; 5-amino-1-(5-phospho-D-ribosyl)imidazole from N(2)-formyl-N(1)-(5-phospho-D-ribosyl)glycinamide: step 2/2. The polypeptide is Phosphoribosylformylglycinamidine cyclo-ligase (Rhodopseudomonas palustris (strain ATCC BAA-98 / CGA009)).